The following is a 295-amino-acid chain: Alpha-1A adrenergic receptor (295 aa).

The Extracellular segment spans residues 1 to 27 (MVFLSGNASDSSNCTHPPAPVNISKAI). N-linked (GlcNAc...) asparagine glycosylation is found at N7, N13, and N22. Residues 28–51 (LLGVILGGLIIFGVLGNILVILSV) traverse the membrane as a helical segment. Topologically, residues 52-64 (ACHRHLHSVTHYY) are cytoplasmic. The helical transmembrane segment at 65–88 (IVNLAVADLLLTSTVLPFSAIFEI) threads the bilayer. Over 89 to 99 (LGYWAFGRVFC) the chain is Extracellular. A disulfide bond links C99 and C176. Residues 100–122 (NIWAAVDVLCCTASIMGLCIISI) form a helical membrane-spanning segment. At 123–143 (DRYIGVSYPLRYPTIVTQKRG) the chain is on the cytoplasmic side. The chain crosses the membrane as a helical span at residues 144 to 167 (LMALLCVWALSLVISIGPLFGWRQ). The Extracellular portion of the chain corresponds to 168-181 (PAPEDETICQITEE). A helical membrane pass occupies residues 182 to 205 (PGYVLFSALGSFYVPLTIILVMYC). Over 206–273 (RVYVVAKRES…FSREKKAAKT (68 aa)) the chain is Cytoplasmic. At S215 the chain carries Phosphoserine; by PKA. A helical membrane pass occupies residues 274–295 (LGIVVGCFVLCWLPFFLVMPIG).

This sequence belongs to the G-protein coupled receptor 1 family. Adrenergic receptor subfamily. ADRA1A sub-subfamily. As to quaternary structure, homo- and heterooligomer. Heterooligomerizes with ADRA1B homooligomers in cardiac myocytes. Interacts with CAVIN4.

The protein resides in the nucleus membrane. It localises to the cell membrane. It is found in the cytoplasm. The protein localises to the membrane. Its subcellular location is the caveola. This alpha-adrenergic receptor mediates its action by association with G proteins that activate a phosphatidylinositol-calcium second messenger system. Its effect is mediated by G(q) and G(11) proteins. Nuclear ADRA1A-ADRA1B heterooligomers regulate phenylephrine (PE)-stimulated ERK signaling in cardiac myocytes. This Canis lupus familiaris (Dog) protein is Alpha-1A adrenergic receptor (ADRA1A).